The following is a 318-amino-acid chain: Acetyl-coenzyme A carboxylase carboxyl transferase subunit alpha (318 aa).

The 262-residue stretch at Asn-32–Arg-293 folds into the CoA carboxyltransferase C-terminal domain.

It belongs to the AccA family. In terms of assembly, acetyl-CoA carboxylase is a heterohexamer composed of biotin carboxyl carrier protein (AccB), biotin carboxylase (AccC) and two subunits each of ACCase subunit alpha (AccA) and ACCase subunit beta (AccD).

The protein resides in the cytoplasm. It carries out the reaction N(6)-carboxybiotinyl-L-lysyl-[protein] + acetyl-CoA = N(6)-biotinyl-L-lysyl-[protein] + malonyl-CoA. It participates in lipid metabolism; malonyl-CoA biosynthesis; malonyl-CoA from acetyl-CoA: step 1/1. Component of the acetyl coenzyme A carboxylase (ACC) complex. First, biotin carboxylase catalyzes the carboxylation of biotin on its carrier protein (BCCP) and then the CO(2) group is transferred by the carboxyltransferase to acetyl-CoA to form malonyl-CoA. This is Acetyl-coenzyme A carboxylase carboxyl transferase subunit alpha from Halorhodospira halophila (strain DSM 244 / SL1) (Ectothiorhodospira halophila (strain DSM 244 / SL1)).